The chain runs to 184 residues: Large ribosomal subunit protein uL6 (184 aa).

Belongs to the universal ribosomal protein uL6 family. In terms of assembly, part of the 50S ribosomal subunit.

Its function is as follows. This protein binds to the 23S rRNA, and is important in its secondary structure. It is located near the subunit interface in the base of the L7/L12 stalk, and near the tRNA binding site of the peptidyltransferase center. The sequence is that of Large ribosomal subunit protein uL6 from Fervidobacterium nodosum (strain ATCC 35602 / DSM 5306 / Rt17-B1).